Consider the following 486-residue polypeptide: High-affinity iron permease fer2 (486 aa).

2 helical membrane-spanning segments follow: residues 76–96 and 113–133; these read IVLL…AAFL and LWEG…SLAI. N-linked (GlcNAc...) asparagine glycosylation occurs at N174. Positions 175 to 209 are disordered; the sequence is HSDDSASASSSSARQAAEEEAGTKTTRTEKLNPLE. Residues 179-189 are compositionally biased toward low complexity; sequence SASASSSSARQ. The next 3 helical transmembrane spans lie at 252–272, 283–303, and 308–328; these read ALFT…VVFI, SIPL…FLIF, and LVSV…IASG. A glycan (N-linked (GlcNAc...) asparagine) is linked at N393. Residues 400–420 form a helical membrane-spanning segment; the sequence is SVFMYIGYWFAVAGYLWYQIW. N438 carries an N-linked (GlcNAc...) asparagine glycan. A disordered region spans residues 441–486; the sequence is IQARQRKQEKAHQRQLREADQEEHGHSSNSDKQQHPSEAGPSTLSH. Residues 446 to 466 show a composition bias toward basic and acidic residues; that stretch reads RKQEKAHQRQLREADQEEHGH.

It belongs to the oxidase-dependent Fe transporter (OFeT) (TC 9.A.10.1) family.

The protein resides in the cell membrane. In terms of biological role, permease for high affinity iron uptake. The chain is High-affinity iron permease fer2 from Mycosarcoma maydis (Corn smut fungus).